An 83-amino-acid polypeptide reads, in one-letter code: UPF0297 protein CKR_1221 (83 aa).

The protein belongs to the UPF0297 family.

The sequence is that of UPF0297 protein CKR_1221 from Clostridium kluyveri (strain NBRC 12016).